A 156-amino-acid chain; its full sequence is ATP synthase subunit b (156 aa).

The chain crosses the membrane as a helical span at residues 11-31; that stretch reads AIAFVLFVLFCMKYVWPPIMA.

It belongs to the ATPase B chain family. In terms of assembly, F-type ATPases have 2 components, F(1) - the catalytic core - and F(0) - the membrane proton channel. F(1) has five subunits: alpha(3), beta(3), gamma(1), delta(1), epsilon(1). F(0) has three main subunits: a(1), b(2) and c(10-14). The alpha and beta chains form an alternating ring which encloses part of the gamma chain. F(1) is attached to F(0) by a central stalk formed by the gamma and epsilon chains, while a peripheral stalk is formed by the delta and b chains.

The protein resides in the cell inner membrane. Functionally, f(1)F(0) ATP synthase produces ATP from ADP in the presence of a proton or sodium gradient. F-type ATPases consist of two structural domains, F(1) containing the extramembraneous catalytic core and F(0) containing the membrane proton channel, linked together by a central stalk and a peripheral stalk. During catalysis, ATP synthesis in the catalytic domain of F(1) is coupled via a rotary mechanism of the central stalk subunits to proton translocation. Its function is as follows. Component of the F(0) channel, it forms part of the peripheral stalk, linking F(1) to F(0). This Proteus mirabilis (strain HI4320) protein is ATP synthase subunit b.